The sequence spans 145 residues: D-aminoacyl-tRNA deacylase (145 aa).

The short motif at 137-138 (GP) is the Gly-cisPro motif, important for rejection of L-amino acids element.

The protein belongs to the DTD family. In terms of assembly, homodimer.

The protein localises to the cytoplasm. The catalysed reaction is glycyl-tRNA(Ala) + H2O = tRNA(Ala) + glycine + H(+). The enzyme catalyses a D-aminoacyl-tRNA + H2O = a tRNA + a D-alpha-amino acid + H(+). Functionally, an aminoacyl-tRNA editing enzyme that deacylates mischarged D-aminoacyl-tRNAs. Also deacylates mischarged glycyl-tRNA(Ala), protecting cells against glycine mischarging by AlaRS. Acts via tRNA-based rather than protein-based catalysis; rejects L-amino acids rather than detecting D-amino acids in the active site. By recycling D-aminoacyl-tRNA to D-amino acids and free tRNA molecules, this enzyme counteracts the toxicity associated with the formation of D-aminoacyl-tRNA entities in vivo and helps enforce protein L-homochirality. The polypeptide is D-aminoacyl-tRNA deacylase (Streptomyces avermitilis (strain ATCC 31267 / DSM 46492 / JCM 5070 / NBRC 14893 / NCIMB 12804 / NRRL 8165 / MA-4680)).